The sequence spans 301 residues: ATP synthase gamma chain (301 aa).

Belongs to the ATPase gamma chain family. F-type ATPases have 2 components, CF(1) - the catalytic core - and CF(0) - the membrane proton channel. CF(1) has five subunits: alpha(3), beta(3), gamma(1), delta(1), epsilon(1). CF(0) has three main subunits: a, b and c.

The protein localises to the cell inner membrane. Produces ATP from ADP in the presence of a proton gradient across the membrane. The gamma chain is believed to be important in regulating ATPase activity and the flow of protons through the CF(0) complex. The sequence is that of ATP synthase gamma chain from Bordetella parapertussis (strain 12822 / ATCC BAA-587 / NCTC 13253).